The sequence spans 75 residues: Sec-independent protein translocase protein TatA (75 aa).

The chain crosses the membrane as a helical span at residues 1 to 21 (MGISIWQLLIVLGIVILLFGT). The interval 41-75 (SMSDEEEKNAEQQPLEKQNAEQQAQAEDKPKEKQG) is disordered. Over residues 56-65 (EKQNAEQQAQ) the composition is skewed to low complexity. A compositionally biased stretch (basic and acidic residues) spans 66 to 75 (AEDKPKEKQG).

It belongs to the TatA/E family. As to quaternary structure, the Tat system comprises two distinct complexes: a TatABC complex, containing multiple copies of TatA, TatB and TatC subunits, and a separate TatA complex, containing only TatA subunits. Substrates initially bind to the TatABC complex, which probably triggers association of the separate TatA complex to form the active translocon.

The protein resides in the cell inner membrane. In terms of biological role, part of the twin-arginine translocation (Tat) system that transports large folded proteins containing a characteristic twin-arginine motif in their signal peptide across membranes. TatA could form the protein-conducting channel of the Tat system. This Marinobacter nauticus (strain ATCC 700491 / DSM 11845 / VT8) (Marinobacter aquaeolei) protein is Sec-independent protein translocase protein TatA.